Here is a 439-residue protein sequence, read N- to C-terminus: Protein PHYTOCHROME KINASE SUBSTRATE 1 (439 aa).

The span at 1-14 (MVTLTPSSASTPKT) shows a compositional bias: polar residues. Disordered stretches follow at residues 1–22 (MVTLTPSSASTPKTSFDFMKNN), 54–80 (KTLNMSINPKQEEFGDEKKMVKKAPED), and 100–139 (QGSSVLSLTNPEVERTVVDSKQSAKKSTGTPSVRSESSWN). Residues 63–79 (KQEEFGDEKKMVKKAPE) are compositionally biased toward basic and acidic residues. Polar residues-rich tracts occupy residues 100 to 109 (QGSSVLSLTN) and 118 to 139 (DSKQSAKKSTGTPSVRSESSWN). A phosphoserine mark is found at serine 238 and serine 244. Disordered regions lie at residues 259–311 (LPLP…PTCY) and 355–439 (TAKS…LYSQ). Over residues 412-421 (TKPKSFETRR) the composition is skewed to basic and acidic residues. Over residues 424–439 (SNSSISHTQSSLLYSQ) the composition is skewed to low complexity.

Belongs to the PKS family. As to quaternary structure, interacts with PKS2, RPT3, PHOT1, PHOT2 and the C-termini of both phytochromes A (phyA) and B (phyB). Binds both spectral forms of phytochrome, Pr and Pfr. Phosphorylated on Ser and to a lower extent on Thr by phytochromes. Phosphorylation is stimulated twofold by red light. Expressed in young seedlings in both darkness and light. Moderate in leaves and very low in roots and flowers. Expressed in the elongation zone of the root and hypocotyl.

It is found in the cell membrane. Its function is as follows. May be responsible for light-regulated cytoplasmic sequestration of phytochromes or may be a negative regulator of phytochrome B signaling. Component of the network that modulates the very low-fluence response (VLFR) branch of phyA signaling. Acts positively in PHOT1 signaling. Regulates phytochrome-mediated photomorphogenesis and hypocotyl phototropism. Involved in the control of leaf flattening and leaf positioning. Promotes negative root phototropism and negatively regulates root gravitropism. May act by controlling auxin homeostasis. In Arabidopsis thaliana (Mouse-ear cress), this protein is Protein PHYTOCHROME KINASE SUBSTRATE 1 (PKS1).